A 345-amino-acid polypeptide reads, in one-letter code: MSTPTPLSYKDAGVDIDAGNALVNNIKSAVKRTHRPEVMGNLGGFGALCELPTKYKHPVLVSGTDGVGTKLRLAIDYKKHDTVGIDLVAMCVNDLIVQGAEPLFFLDYYATGKLDVDTATSVVNGIGEGCFQSGCALIGGETAEMPGMYEGEDYDLAGFCVGVVEKADIIDGTKVSAGDALIALASSGPHSNGYSLIRKVLEVSKADPQQDLNGKQLIEHLLEPTKIYVKSVLKLIEESDVHAMAHITGGGFWENIPRVLPANAKAVIDGASWQWPVVFDWLKTNGNISQHEMYRTFNCGVGMIIALPADKVDAALSLLEAAGEQAWLIGSIASREGEEEQVEIV.

Belongs to the AIR synthase family.

It localises to the cytoplasm. The catalysed reaction is 2-formamido-N(1)-(5-O-phospho-beta-D-ribosyl)acetamidine + ATP = 5-amino-1-(5-phospho-beta-D-ribosyl)imidazole + ADP + phosphate + H(+). The protein operates within purine metabolism; IMP biosynthesis via de novo pathway; 5-amino-1-(5-phospho-D-ribosyl)imidazole from N(2)-formyl-N(1)-(5-phospho-D-ribosyl)glycinamide: step 2/2. The protein is Phosphoribosylformylglycinamidine cyclo-ligase of Shewanella denitrificans (strain OS217 / ATCC BAA-1090 / DSM 15013).